A 235-amino-acid chain; its full sequence is Pyridoxine 5'-phosphate synthase (235 aa).

Position 6 (Asn6) interacts with 3-amino-2-oxopropyl phosphate. 1-deoxy-D-xylulose 5-phosphate is bound at residue 8–9; the sequence is DH. Arg17 provides a ligand contact to 3-amino-2-oxopropyl phosphate. His42 acts as the Proton acceptor in catalysis. Residues Arg44 and His49 each contribute to the 1-deoxy-D-xylulose 5-phosphate site. Glu69 functions as the Proton acceptor in the catalytic mechanism. A 1-deoxy-D-xylulose 5-phosphate-binding site is contributed by Thr99. The active-site Proton donor is His189. 3-amino-2-oxopropyl phosphate-binding positions include Gly190 and 211-212; that span reads GH.

The protein belongs to the PNP synthase family. Homooctamer; tetramer of dimers.

The protein localises to the cytoplasm. It catalyses the reaction 3-amino-2-oxopropyl phosphate + 1-deoxy-D-xylulose 5-phosphate = pyridoxine 5'-phosphate + phosphate + 2 H2O + H(+). It participates in cofactor biosynthesis; pyridoxine 5'-phosphate biosynthesis; pyridoxine 5'-phosphate from D-erythrose 4-phosphate: step 5/5. Functionally, catalyzes the complicated ring closure reaction between the two acyclic compounds 1-deoxy-D-xylulose-5-phosphate (DXP) and 3-amino-2-oxopropyl phosphate (1-amino-acetone-3-phosphate or AAP) to form pyridoxine 5'-phosphate (PNP) and inorganic phosphate. This is Pyridoxine 5'-phosphate synthase from Chlorobium phaeovibrioides (strain DSM 265 / 1930) (Prosthecochloris vibrioformis (strain DSM 265)).